Here is a 505-residue protein sequence, read N- to C-terminus: Putative thymidine phosphorylase (505 aa).

It belongs to the thymidine/pyrimidine-nucleoside phosphorylase family. Type 2 subfamily.

It catalyses the reaction thymidine + phosphate = 2-deoxy-alpha-D-ribose 1-phosphate + thymine. This is Putative thymidine phosphorylase from Parvibaculum lavamentivorans (strain DS-1 / DSM 13023 / NCIMB 13966).